We begin with the raw amino-acid sequence, 310 residues long: Olfactory receptor 5P1 (310 aa).

Residues 1–25 lie on the Extracellular side of the membrane; it reads MEPGNHTAVTKFILLGLTDDPTLCV. N5 is a glycosylation site (N-linked (GlcNAc...) asparagine). A helical membrane pass occupies residues 26–46; it reads IFFVFFLGIYIVTLVGNISII. The Cytoplasmic portion of the chain corresponds to 47–54; the sequence is NLVRSCPQ. Residues 55–75 form a helical membrane-spanning segment; it reads LQTPMYMFLSHLAFVDIGYST. The Extracellular portion of the chain corresponds to 76–99; the sequence is SVTPIMLIGFIVHETGLPVHACEA. C97 and C189 are joined by a disulfide. A helical transmembrane segment spans residues 100–120; it reads QLCSVVTFGTAECFLLAAMAY. The Cytoplasmic segment spans residues 121 to 133; that stretch reads DRYVAICSPLLYS. Residues 134–154 form a helical membrane-spanning segment; sequence THMSSQICLLLVGASYVGGCV. The Extracellular segment spans residues 155 to 196; sequence NAWTFTGCLLSLSFCGPNKIDHFFCDFSPLLKLSCSDVSIIG. The chain crosses the membrane as a helical span at residues 197-217; the sequence is IIPSISAGSIIVVTVFVISVS. Residues 218 to 237 are Cytoplasmic-facing; that stretch reads YIYILITILKMRSTEGRHKA. Residues 238-258 traverse the membrane as a helical segment; sequence FSTCTSHLTAVTLYYGTITFI. At 259-271 the chain is on the extracellular side; the sequence is YVMPKSSYSTKQN. A helical membrane pass occupies residues 272 to 292; sequence RVVSLFYTVVIPMLNPLIYSL. Residues 293–310 lie on the Cytoplasmic side of the membrane; that stretch reads RNRDVKEALRKATLRIYS.

Belongs to the G-protein coupled receptor 1 family.

The protein resides in the cell membrane. Its function is as follows. Potential odorant receptor. This is Olfactory receptor 5P1 from Mus musculus (Mouse).